Reading from the N-terminus, the 500-residue chain is 4-aminobutyrate aminotransferase, mitochondrial (500 aa).

The transit peptide at 1-27 (MAFLLTTRRLVCSSQKNLHLFTPGSRY) directs the protein to the mitochondrion. C163 contacts [2Fe-2S] cluster. Pyridoxal 5'-phosphate is bound at residue 164-165 (GS). [2Fe-2S] cluster is bound at residue C166. R220 contributes to the substrate binding site. K231 bears the N6-succinyllysine mark. K252 is modified (N6-acetyllysine; alternate). N6-succinyllysine; alternate is present on K252. N6-acetyllysine is present on residues K279 and K318. K357 carries the post-translational modification N6-(pyridoxal phosphate)lysine. Residue T381 coordinates pyridoxal 5'-phosphate. An N6-acetyllysine; alternate modification is found at K413. Residue K413 is modified to N6-succinyllysine; alternate. 2 positions are modified to N6-acetyllysine: K452 and K470.

Belongs to the class-III pyridoxal-phosphate-dependent aminotransferase family. Homodimer; disulfide-linked. It depends on pyridoxal 5'-phosphate as a cofactor. [2Fe-2S] cluster is required as a cofactor.

The protein localises to the mitochondrion matrix. The catalysed reaction is 4-aminobutanoate + 2-oxoglutarate = succinate semialdehyde + L-glutamate. It carries out the reaction (S)-3-amino-2-methylpropanoate + 2-oxoglutarate = 2-methyl-3-oxopropanoate + L-glutamate. Functionally, catalyzes the conversion of gamma-aminobutyrate and L-beta-aminoisobutyrate to succinate semialdehyde and methylmalonate semialdehyde, respectively. Can also convert delta-aminovalerate and beta-alanine. In Rattus norvegicus (Rat), this protein is 4-aminobutyrate aminotransferase, mitochondrial.